Here is a 513-residue protein sequence, read N- to C-terminus: ATP synthase subunit alpha (513 aa).

169–176 (GDRQTGKT) lines the ATP pocket.

This sequence belongs to the ATPase alpha/beta chains family. As to quaternary structure, F-type ATPases have 2 components, CF(1) - the catalytic core - and CF(0) - the membrane proton channel. CF(1) has five subunits: alpha(3), beta(3), gamma(1), delta(1), epsilon(1). CF(0) has three main subunits: a(1), b(2) and c(9-12). The alpha and beta chains form an alternating ring which encloses part of the gamma chain. CF(1) is attached to CF(0) by a central stalk formed by the gamma and epsilon chains, while a peripheral stalk is formed by the delta and b chains.

Its subcellular location is the cell inner membrane. It catalyses the reaction ATP + H2O + 4 H(+)(in) = ADP + phosphate + 5 H(+)(out). Its function is as follows. Produces ATP from ADP in the presence of a proton gradient across the membrane. The alpha chain is a regulatory subunit. This Polynucleobacter necessarius subsp. necessarius (strain STIR1) protein is ATP synthase subunit alpha.